The primary structure comprises 235 residues: Carboxy-S-adenosyl-L-methionine synthase (235 aa).

Residues Y35, 60-62 (GCS), 83-84 (DN), N124, and R191 each bind S-adenosyl-L-methionine.

This sequence belongs to the class I-like SAM-binding methyltransferase superfamily. Cx-SAM synthase family. In terms of assembly, homodimer.

It catalyses the reaction prephenate + S-adenosyl-L-methionine = carboxy-S-adenosyl-L-methionine + 3-phenylpyruvate + H2O. Catalyzes the conversion of S-adenosyl-L-methionine (SAM) to carboxy-S-adenosyl-L-methionine (Cx-SAM). The chain is Carboxy-S-adenosyl-L-methionine synthase from Campylobacter jejuni subsp. jejuni serotype O:6 (strain 81116 / NCTC 11828).